The chain runs to 345 residues: Phosphoribosylformylglycinamidine cyclo-ligase (345 aa).

Belongs to the AIR synthase family.

The protein resides in the cytoplasm. The catalysed reaction is 2-formamido-N(1)-(5-O-phospho-beta-D-ribosyl)acetamidine + ATP = 5-amino-1-(5-phospho-beta-D-ribosyl)imidazole + ADP + phosphate + H(+). It participates in purine metabolism; IMP biosynthesis via de novo pathway; 5-amino-1-(5-phospho-D-ribosyl)imidazole from N(2)-formyl-N(1)-(5-phospho-D-ribosyl)glycinamide: step 2/2. This is Phosphoribosylformylglycinamidine cyclo-ligase from Lactobacillus acidophilus (strain ATCC 700396 / NCK56 / N2 / NCFM).